The primary structure comprises 177 residues: ATP synthase subunit delta (177 aa).

The protein belongs to the ATPase delta chain family. F-type ATPases have 2 components, F(1) - the catalytic core - and F(0) - the membrane proton channel. F(1) has five subunits: alpha(3), beta(3), gamma(1), delta(1), epsilon(1). F(0) has three main subunits: a(1), b(2) and c(10-14). The alpha and beta chains form an alternating ring which encloses part of the gamma chain. F(1) is attached to F(0) by a central stalk formed by the gamma and epsilon chains, while a peripheral stalk is formed by the delta and b chains.

It is found in the cell inner membrane. Its function is as follows. F(1)F(0) ATP synthase produces ATP from ADP in the presence of a proton or sodium gradient. F-type ATPases consist of two structural domains, F(1) containing the extramembraneous catalytic core and F(0) containing the membrane proton channel, linked together by a central stalk and a peripheral stalk. During catalysis, ATP synthesis in the catalytic domain of F(1) is coupled via a rotary mechanism of the central stalk subunits to proton translocation. In terms of biological role, this protein is part of the stalk that links CF(0) to CF(1). It either transmits conformational changes from CF(0) to CF(1) or is implicated in proton conduction. This chain is ATP synthase subunit delta, found in Azobacteroides pseudotrichonymphae genomovar. CFP2.